Reading from the N-terminus, the 349-residue chain is MSGKVAVLGAGSWATALSRLLSKKGCQVVMWSASSEQAREINETRENRHYLPGVMLPADIEVTLDLEKALYKAKAVVYGVPSHAFREVARRSLPYLPENAVLVNVAKGIEEESLYRMSQVFAEEAGLSMLDRYVVLSGPSHAEEVGRDIPTAVVVASPNMERAEQVQDLFMCESFRVYTNPDVVGVELGGALKNIIALGTGIADGLGFGDNTKAALMTRGLAEISRLGMVMGANPLTFAGLSGVGDLIVTCTSMHSRNRRAGMAIGQGKSLEEALSMVKMVVEGVRTTRAARRLSEKHAVQMPITEQIHRVLFEGLSPAVAVNKLMTRGKTHEMEEVALAAAMVGKIKL.

NADPH-binding residues include Ser12, Trp13, and Lys107. The sn-glycerol 3-phosphate site is built by Lys107, Gly138, and Ser140. NADPH is bound at residue Ala142. Sn-glycerol 3-phosphate contacts are provided by Lys193, Asp246, Ser256, Arg257, and Asn258. The active-site Proton acceptor is Lys193. Residue Arg257 participates in NADPH binding. Residues Val281 and Glu283 each coordinate NADPH.

The protein belongs to the NAD-dependent glycerol-3-phosphate dehydrogenase family.

It localises to the cytoplasm. It catalyses the reaction sn-glycerol 3-phosphate + NAD(+) = dihydroxyacetone phosphate + NADH + H(+). The catalysed reaction is sn-glycerol 3-phosphate + NADP(+) = dihydroxyacetone phosphate + NADPH + H(+). It participates in membrane lipid metabolism; glycerophospholipid metabolism. In terms of biological role, catalyzes the reduction of the glycolytic intermediate dihydroxyacetone phosphate (DHAP) to sn-glycerol 3-phosphate (G3P), the key precursor for phospholipid synthesis. The sequence is that of Glycerol-3-phosphate dehydrogenase [NAD(P)+] from Pelotomaculum thermopropionicum (strain DSM 13744 / JCM 10971 / SI).